A 99-amino-acid chain; its full sequence is NADH-quinone oxidoreductase subunit K (99 aa).

Transmembrane regions (helical) follow at residues 3-23 (PANYLILSALLFTIGTVGVLV), 28-48 (IVVFMSVELMLNAVNLTLVTF), and 59-79 (IMAFFVMVVAAAEVVIGLAII).

Belongs to the complex I subunit 4L family. NDH-1 is composed of 14 different subunits. Subunits NuoA, H, J, K, L, M, N constitute the membrane sector of the complex.

The protein localises to the cell membrane. The catalysed reaction is a quinone + NADH + 5 H(+)(in) = a quinol + NAD(+) + 4 H(+)(out). Its function is as follows. NDH-1 shuttles electrons from NADH, via FMN and iron-sulfur (Fe-S) centers, to quinones in the respiratory chain. The immediate electron acceptor for the enzyme in this species is believed to be a menaquinone. Couples the redox reaction to proton translocation (for every two electrons transferred, four hydrogen ions are translocated across the cytoplasmic membrane), and thus conserves the redox energy in a proton gradient. The protein is NADH-quinone oxidoreductase subunit K of Frankia casuarinae (strain DSM 45818 / CECT 9043 / HFP020203 / CcI3).